The chain runs to 344 residues: Dihydroorotase (344 aa).

2 residues coordinate Zn(2+): histidine 14 and histidine 16. Substrate contacts are provided by residues histidine 16–arginine 18 and asparagine 42. Residues lysine 100, histidine 137, and histidine 175 each contribute to the Zn(2+) site. Residue lysine 100 is modified to N6-carboxylysine. A substrate-binding site is contributed by histidine 137. Leucine 220 contacts substrate. Aspartate 248 lines the Zn(2+) pocket. The active site involves aspartate 248. Histidine 252 and alanine 264 together coordinate substrate.

It belongs to the metallo-dependent hydrolases superfamily. DHOase family. Class II DHOase subfamily. As to quaternary structure, homodimer. It depends on Zn(2+) as a cofactor.

The catalysed reaction is (S)-dihydroorotate + H2O = N-carbamoyl-L-aspartate + H(+). The protein operates within pyrimidine metabolism; UMP biosynthesis via de novo pathway; (S)-dihydroorotate from bicarbonate: step 3/3. In terms of biological role, catalyzes the reversible cyclization of carbamoyl aspartate to dihydroorotate. This is Dihydroorotase from Ralstonia nicotianae (strain ATCC BAA-1114 / GMI1000) (Ralstonia solanacearum).